The sequence spans 294 residues: ATP synthase gamma chain (294 aa).

This sequence belongs to the ATPase gamma chain family. F-type ATPases have 2 components, CF(1) - the catalytic core - and CF(0) - the membrane proton channel. CF(1) has five subunits: alpha(3), beta(3), gamma(1), delta(1), epsilon(1). CF(0) has three main subunits: a, b and c.

The protein resides in the cell inner membrane. Functionally, produces ATP from ADP in the presence of a proton gradient across the membrane. The gamma chain is believed to be important in regulating ATPase activity and the flow of protons through the CF(0) complex. The protein is ATP synthase gamma chain of Paraburkholderia xenovorans (strain LB400).